Consider the following 71-residue polypeptide: Large ribosomal subunit protein uL29 (71 aa).

Residues 32–51 (GVNKSTGGAPSNPGKISETK) form a disordered region.

The protein belongs to the universal ribosomal protein uL29 family.

The sequence is that of Large ribosomal subunit protein uL29 from Methanococcus maripaludis (strain DSM 14266 / JCM 13030 / NBRC 101832 / S2 / LL).